A 195-amino-acid polypeptide reads, in one-letter code: Peptidyl-tRNA hydrolase (195 aa).

Tyr-17 provides a ligand contact to tRNA. His-22 serves as the catalytic Proton acceptor. Tyr-68, Asn-70, and Asn-116 together coordinate tRNA.

This sequence belongs to the PTH family. As to quaternary structure, monomer.

It localises to the cytoplasm. It catalyses the reaction an N-acyl-L-alpha-aminoacyl-tRNA + H2O = an N-acyl-L-amino acid + a tRNA + H(+). Its function is as follows. Hydrolyzes ribosome-free peptidyl-tRNAs (with 1 or more amino acids incorporated), which drop off the ribosome during protein synthesis, or as a result of ribosome stalling. Catalyzes the release of premature peptidyl moieties from peptidyl-tRNA molecules trapped in stalled 50S ribosomal subunits, and thus maintains levels of free tRNAs and 50S ribosomes. The polypeptide is Peptidyl-tRNA hydrolase (Shewanella sp. (strain MR-4)).